The following is a 355-amino-acid chain: UDP-N-acetylglucosamine--N-acetylmuramyl-(pentapeptide) pyrophosphoryl-undecaprenol N-acetylglucosamine transferase (355 aa).

Residues 11-13 (TAG), Arg-164, Ser-194, and Gln-289 contribute to the UDP-N-acetyl-alpha-D-glucosamine site.

The protein belongs to the glycosyltransferase 28 family. MurG subfamily.

It is found in the cell membrane. It catalyses the reaction di-trans,octa-cis-undecaprenyl diphospho-N-acetyl-alpha-D-muramoyl-L-alanyl-D-glutamyl-meso-2,6-diaminopimeloyl-D-alanyl-D-alanine + UDP-N-acetyl-alpha-D-glucosamine = di-trans,octa-cis-undecaprenyl diphospho-[N-acetyl-alpha-D-glucosaminyl-(1-&gt;4)]-N-acetyl-alpha-D-muramoyl-L-alanyl-D-glutamyl-meso-2,6-diaminopimeloyl-D-alanyl-D-alanine + UDP + H(+). Its pathway is cell wall biogenesis; peptidoglycan biosynthesis. Its function is as follows. Cell wall formation. Catalyzes the transfer of a GlcNAc subunit on undecaprenyl-pyrophosphoryl-MurNAc-pentapeptide (lipid intermediate I) to form undecaprenyl-pyrophosphoryl-MurNAc-(pentapeptide)GlcNAc (lipid intermediate II). This is UDP-N-acetylglucosamine--N-acetylmuramyl-(pentapeptide) pyrophosphoryl-undecaprenol N-acetylglucosamine transferase from Lachnoclostridium phytofermentans (strain ATCC 700394 / DSM 18823 / ISDg) (Clostridium phytofermentans).